Reading from the N-terminus, the 435-residue chain is DMATS-type prenyltransferase fscG (435 aa).

Residues arginine 111, lysine 193, tyrosine 195, arginine 259, lysine 261, tyrosine 263, tyrosine 352, and tyrosine 423 each contribute to the dimethylallyl diphosphate site.

This sequence belongs to the tryptophan dimethylallyltransferase family.

The protein operates within secondary metabolite biosynthesis. In terms of biological role, DMATS-type prenyltransferase; part of the fragmented gene cluster that mediates the biosynthesis of fusarochromene, a tryptophan-derived metabolite closely related to a group of mycotoxins including fusarochromanone. Within the pathway, fscG catalyzes the prenylation of the primary alcohol produced by fscA which is necessary for the formation of the chromene ring by the oxidoreductase fscI. The first step of the pathway is the epimerization of L-tryptophan to D-tryptophan in the presence of the NRPS-like tryptophan epimerase fscC. D-tryptophan is subsequently hydroxylated by the tryptophan 6-hydroxylase fscE to yield 6-hydroxytryptophan. The pyrrole ring undergoes cleavaged by the tryptophan 2,3-dioxygenase fscD and is finally converted to 4-hydroxykyrunenine by the hydrolase fscH. The NRPS-like oxidoreductase fscA reduces the carboxyl group to primary alcohol and the DMATS-type prenyltransferase fscG performs prenylation, followed by the formation of a chromene ring catalyzed by the oxidoreductase fscI, which leads to desacetylfusarochromene. Epoxidation by fscF and rearrangement reactions of chromene double bonds convert compound desacetylfusarochromene to fusarochromanones. Although specific acetyltransferases were not found near the fsc gene cluster, several predicted enzymes containing the N-acetyltransferase superfamily domain are present in the genome of F.equiseti. These predicted enzymes may have the potential to convert desacetylfusarochromene to fusarochromene. This is DMATS-type prenyltransferase fscG from Fusarium equiseti (Fusarium scirpi).